The sequence spans 181 residues: Photosystem I assembly protein Ycf4 (181 aa).

2 helical membrane-spanning segments follow: residues 19 to 41 (YAWC…GSYF) and 61 to 83 (IVMM…SIFT).

The protein belongs to the Ycf4 family.

The protein resides in the plastid. It is found in the chloroplast thylakoid membrane. Functionally, seems to be required for the assembly of the photosystem I complex. The chain is Photosystem I assembly protein Ycf4 from Guillardia theta (Cryptophyte).